A 2514-amino-acid polypeptide reads, in one-letter code: Probable polyketide synthase 8/35 (2514 aa).

One can recognise a Ketosynthase family 3 (KS3) domain in the interval 11 to 442; that stretch reads DKGVAIVGVG…GSNCCLLISE (432 aa). Active-site for beta-ketoacyl synthase activity residues include Cys-181, His-323, and His-362. Residues 635–668 are acyl/malonyl transferase; sequence GVNPSFILGHSLGEISAAYCSGMIDLDTFCYTVY. Ser-645 (for acyl/malonyl transferase activity) is an active-site residue. The N-terminal hotdog fold stretch occupies residues 925–1047; it reads IDHLGLSNSY…ANFQLLDHGN (123 aa). The PKS/mFAS DH domain occupies 925–1209; it reads IDHLGLSNSY…FKSLIPIKHS (285 aa). The Proton acceptor; for dehydratase activity role is filled by His-959. Positions 1064–1209 are C-terminal hotdog fold; the sequence is NLSKLTKNEL…FKSLIPIKHS (146 aa). The active-site Proton donor; for dehydratase activity is the Asp-1122. The Carrier domain maps to 2431–2508; sequence IGNKNIDELF…ISIKMILNSL (78 aa). At Ser-2468 the chain carries O-(pantetheine 4'-phosphoryl)serine.

It depends on pantetheine 4'-phosphate as a cofactor.

Functionally, probable polyketide synthase. The chain is Probable polyketide synthase 8/35 (pks8) from Dictyostelium discoideum (Social amoeba).